Consider the following 327-residue polypeptide: GTP 3',8-cyclase (327 aa).

Residues 7 to 232 enclose the Radical SAM core domain; the sequence is HHDRQFRYLR…IKRDRTAGPA (226 aa). Arginine 16 is a binding site for GTP. [4Fe-4S] cluster-binding residues include cysteine 23 and cysteine 27. Tyrosine 29 contributes to the S-adenosyl-L-methionine binding site. Position 30 (cysteine 30) interacts with [4Fe-4S] cluster. A GTP-binding site is contributed by arginine 66. Glycine 70 is a binding site for S-adenosyl-L-methionine. Position 97 (threonine 97) interacts with GTP. Serine 121 provides a ligand contact to S-adenosyl-L-methionine. Position 158 (lysine 158) interacts with GTP. Residue methionine 192 coordinates S-adenosyl-L-methionine. [4Fe-4S] cluster contacts are provided by cysteine 255 and cysteine 258. 260–262 contacts GTP; that stretch reads RLR. Cysteine 272 is a binding site for [4Fe-4S] cluster.

This sequence belongs to the radical SAM superfamily. MoaA family. Monomer and homodimer. [4Fe-4S] cluster serves as cofactor.

The catalysed reaction is GTP + AH2 + S-adenosyl-L-methionine = (8S)-3',8-cyclo-7,8-dihydroguanosine 5'-triphosphate + 5'-deoxyadenosine + L-methionine + A + H(+). It participates in cofactor biosynthesis; molybdopterin biosynthesis. Its function is as follows. Catalyzes the cyclization of GTP to (8S)-3',8-cyclo-7,8-dihydroguanosine 5'-triphosphate. The polypeptide is GTP 3',8-cyclase (Synechococcus elongatus (strain ATCC 33912 / PCC 7942 / FACHB-805) (Anacystis nidulans R2)).